We begin with the raw amino-acid sequence, 470 residues long: Probable citrate synthase, mitochondrial (470 aa).

Catalysis depends on residues His-297, His-351, and Asp-406.

Belongs to the citrate synthase family. In terms of assembly, homodimer.

Its subcellular location is the mitochondrion matrix. The catalysed reaction is oxaloacetate + acetyl-CoA + H2O = citrate + CoA + H(+). It participates in carbohydrate metabolism; tricarboxylic acid cycle; isocitrate from oxaloacetate: step 1/2. The chain is Probable citrate synthase, mitochondrial from Leishmania major.